The following is a 91-amino-acid chain: Long neurotoxin OH-56 (91 aa).

Positions M1 to T21 are cleaved as a signal peptide. Disulfide bonds link C24–C42, C35–C63, C48–C52, C67–C78, and C79–C84.

Belongs to the three-finger toxin family. Long-chain subfamily. Type II alpha-neurotoxin sub-subfamily. In terms of tissue distribution, expressed by the venom gland.

Its subcellular location is the secreted. Its function is as follows. Binds with high affinity to muscular (alpha-1/CHRNA1) and neuronal (alpha-7/CHRNA7) nicotinic acetylcholine receptor (nAChR) and inhibits acetylcholine from binding to the receptor, thereby impairing neuromuscular and neuronal transmission. The chain is Long neurotoxin OH-56 from Ophiophagus hannah (King cobra).